The sequence spans 311 residues: DNA repair and recombination protein RadA (311 aa).

Residue 104-111 (GEFGSGKS) coordinates ATP.

Belongs to the eukaryotic RecA-like protein family.

Involved in DNA repair and in homologous recombination. Binds and assemble on single-stranded DNA to form a nucleoprotein filament. Hydrolyzes ATP in a ssDNA-dependent manner and promotes DNA strand exchange between homologous DNA molecules. This Methanobrevibacter smithii (strain ATCC 35061 / DSM 861 / OCM 144 / PS) protein is DNA repair and recombination protein RadA.